Here is a 473-residue protein sequence, read N- to C-terminus: Photosystem II CP43 reaction center protein (473 aa).

Positions 1-14 are excised as a propeptide; that stretch reads MKTLYSLRRFYPVE. The residue at position 15 (Thr-15) is an N-acetylthreonine. The residue at position 15 (Thr-15) is a Phosphothreonine. 5 consecutive transmembrane segments (helical) span residues 69 to 93, 134 to 155, 178 to 200, 255 to 275, and 291 to 312; these read LFEV…PHLA, LLGP…KDRN, KALY…RKIT, KPFA…LSYS, and WFNN…ASQA. Glu-367 contacts [CaMn4O5] cluster. The chain crosses the membrane as a helical span at residues 447 to 471; sequence RARAAAAGFEKGIDRDFEPVLSMTP.

Belongs to the PsbB/PsbC family. PsbC subfamily. As to quaternary structure, PSII is composed of 1 copy each of membrane proteins PsbA, PsbB, PsbC, PsbD, PsbE, PsbF, PsbH, PsbI, PsbJ, PsbK, PsbL, PsbM, PsbT, PsbX, PsbY, PsbZ, Psb30/Ycf12, at least 3 peripheral proteins of the oxygen-evolving complex and a large number of cofactors. It forms dimeric complexes. Requires Binds multiple chlorophylls and provides some of the ligands for the Ca-4Mn-5O cluster of the oxygen-evolving complex. It may also provide a ligand for a Cl- that is required for oxygen evolution. PSII binds additional chlorophylls, carotenoids and specific lipids. as cofactor.

It is found in the plastid. The protein resides in the chloroplast thylakoid membrane. One of the components of the core complex of photosystem II (PSII). It binds chlorophyll and helps catalyze the primary light-induced photochemical processes of PSII. PSII is a light-driven water:plastoquinone oxidoreductase, using light energy to abstract electrons from H(2)O, generating O(2) and a proton gradient subsequently used for ATP formation. The chain is Photosystem II CP43 reaction center protein from Helianthus annuus (Common sunflower).